The sequence spans 249 residues: Secreted flagellin C (249 aa).

In terms of processing, the secreted form is about 1 kDa larger than the whole cell lysate form, presumably due to post-translational modification. A 22 kDa form is also found in the secreted fraction, probably resulting from proteolysis.

Its subcellular location is the secreted. It localises to the host cell surface. Plays a role in virulence. This is Secreted flagellin C (flaC) from Campylobacter jejuni subsp. jejuni serotype O:2 (strain ATCC 700819 / NCTC 11168).